A 180-amino-acid polypeptide reads, in one-letter code: Acireductone dioxygenase (180 aa).

4 residues coordinate Fe(2+): His97, His99, Glu103, and His141. Positions 97, 99, 103, and 141 each coordinate Ni(2+).

It belongs to the acireductone dioxygenase (ARD) family. Monomer. Fe(2+) serves as cofactor. It depends on Ni(2+) as a cofactor.

It catalyses the reaction 1,2-dihydroxy-5-(methylsulfanyl)pent-1-en-3-one + O2 = 3-(methylsulfanyl)propanoate + CO + formate + 2 H(+). It carries out the reaction 1,2-dihydroxy-5-(methylsulfanyl)pent-1-en-3-one + O2 = 4-methylsulfanyl-2-oxobutanoate + formate + 2 H(+). Its pathway is amino-acid biosynthesis; L-methionine biosynthesis via salvage pathway; L-methionine from S-methyl-5-thio-alpha-D-ribose 1-phosphate: step 5/6. In terms of biological role, catalyzes 2 different reactions between oxygen and the acireductone 1,2-dihydroxy-3-keto-5-methylthiopentene (DHK-MTPene) depending upon the metal bound in the active site. Fe-containing acireductone dioxygenase (Fe-ARD) produces formate and 2-keto-4-methylthiobutyrate (KMTB), the alpha-ketoacid precursor of methionine in the methionine recycle pathway. Ni-containing acireductone dioxygenase (Ni-ARD) produces methylthiopropionate, carbon monoxide and formate, and does not lie on the methionine recycle pathway. In Cronobacter sakazakii (Enterobacter sakazakii), this protein is Acireductone dioxygenase.